The sequence spans 462 residues: Chitinase-like mite allergen Der p 18.0101 (462 aa).

The N-terminal stretch at 1-25 (MTRLSFTVLIFLAAYFGSNIRPNVA) is a signal peptide. Residues 29–378 (PKTVCYYESW…HAINSNYFRG (350 aa)) form the GH18 domain. A disulfide bridge links cysteine 33 with cysteine 58. 2 N-linked (GlcNAc...) asparagine glycosylation sites follow: asparagine 338 and asparagine 441. The Chitin-binding type-2 domain maps to 404–462 (VFHCHQEGFFRDKTYCAKYYECKKGDFGLEQTVHHCPNHSQAFDEVSRTCVDHAKIPGC). An intrachain disulfide couples cysteine 439 to cysteine 453.

Belongs to the glycosyl hydrolase 18 family. Chitinase class II subfamily. As to expression, expressed in the peritrophic matrix of the midgut, and only very weakly in fecal pellets.

The protein localises to the secreted. Probably a non-catalytic chitinase-like protein, which binds to insoluble chitin and enhances the activity of the catalytic chitinases. Has weak chitin-binding activity. The polypeptide is Chitinase-like mite allergen Der p 18.0101 (Dermatophagoides pteronyssinus (European house dust mite)).